The sequence spans 128 residues: DNA-directed RNA polymerase subunit omega (128 aa).

Belongs to the RNA polymerase subunit omega family. As to quaternary structure, the RNAP catalytic core consists of 2 alpha, 1 beta, 1 beta' and 1 omega subunit. When a sigma factor is associated with the core the holoenzyme is formed, which can initiate transcription.

The enzyme catalyses RNA(n) + a ribonucleoside 5'-triphosphate = RNA(n+1) + diphosphate. In terms of biological role, promotes RNA polymerase assembly. Latches the N- and C-terminal regions of the beta' subunit thereby facilitating its interaction with the beta and alpha subunits. The chain is DNA-directed RNA polymerase subunit omega from Azorhizobium caulinodans (strain ATCC 43989 / DSM 5975 / JCM 20966 / LMG 6465 / NBRC 14845 / NCIMB 13405 / ORS 571).